A 243-amino-acid chain; its full sequence is 5'-methylthioadenosine/S-adenosylhomocysteine nucleosidase (243 aa).

Glu-12 acts as the Proton acceptor in catalysis. Substrate contacts are provided by residues Gly-78, Met-158, and 179 to 180; that span reads ME. Asp-203 functions as the Proton donor in the catalytic mechanism.

This sequence belongs to the PNP/UDP phosphorylase family. MtnN subfamily.

The catalysed reaction is S-adenosyl-L-homocysteine + H2O = S-(5-deoxy-D-ribos-5-yl)-L-homocysteine + adenine. It catalyses the reaction S-methyl-5'-thioadenosine + H2O = 5-(methylsulfanyl)-D-ribose + adenine. It carries out the reaction 5'-deoxyadenosine + H2O = 5-deoxy-D-ribose + adenine. It participates in amino-acid biosynthesis; L-methionine biosynthesis via salvage pathway; S-methyl-5-thio-alpha-D-ribose 1-phosphate from S-methyl-5'-thioadenosine (hydrolase route): step 1/2. In terms of biological role, catalyzes the irreversible cleavage of the glycosidic bond in both 5'-methylthioadenosine (MTA) and S-adenosylhomocysteine (SAH/AdoHcy) to adenine and the corresponding thioribose, 5'-methylthioribose and S-ribosylhomocysteine, respectively. Also cleaves 5'-deoxyadenosine, a toxic by-product of radical S-adenosylmethionine (SAM) enzymes, into 5-deoxyribose and adenine. The chain is 5'-methylthioadenosine/S-adenosylhomocysteine nucleosidase from Colwellia psychrerythraea (strain 34H / ATCC BAA-681) (Vibrio psychroerythus).